A 1344-amino-acid chain; its full sequence is Xanthine dehydrogenase (1344 aa).

A 2Fe-2S ferredoxin-type domain is found at 9–96 (SVLVFFVNGK…GCAVTTVEGI (88 aa)). [2Fe-2S] cluster is bound by residues Cys48, Cys53, Cys56, Cys78, Cys118, Cys121, Cys153, and Cys155. In terms of domain architecture, FAD-binding PCMH-type spans 236-425 (FSSERVTWYR…LGIHFQKTTP (190 aa)). Residues 264–271 (LVVGNTEV), Phe344, 354–358 (CLGGN), Asp367, Leu415, and Lys433 each bind FAD. Mo-molybdopterin-binding residues include Gln781 and Phe812. Substrate is bound by residues Glu816 and Arg894. Mo-molybdopterin is bound at residue Arg926. Phe928 contacts substrate. Ala1093 provides a ligand contact to Mo-molybdopterin. Catalysis depends on Glu1276, which acts as the Proton acceptor.

It belongs to the xanthine dehydrogenase family. As to quaternary structure, homodimer. Requires FAD as cofactor. Mo-molybdopterin is required as a cofactor. [2Fe-2S] cluster serves as cofactor.

Its subcellular location is the peroxisome. It catalyses the reaction xanthine + NAD(+) + H2O = urate + NADH + H(+). The enzyme catalyses hypoxanthine + NAD(+) + H2O = xanthine + NADH + H(+). In terms of biological role, key enzyme in purine degradation. Catalyzes the oxidation of hypoxanthine to xanthine. Catalyzes the oxidation of xanthine to uric acid. The sequence is that of Xanthine dehydrogenase (Xdh) from Drosophila subobscura (Fruit fly).